The sequence spans 368 residues: Agmatine deiminase (368 aa).

Cys357 (amidino-cysteine intermediate) is an active-site residue.

The protein belongs to the agmatine deiminase family. In terms of assembly, homodimer.

It catalyses the reaction agmatine + H2O = N-carbamoylputrescine + NH4(+). It participates in amine and polyamine biosynthesis; putrescine biosynthesis via agmatine pathway; N-carbamoylputrescine from agmatine: step 1/1. In terms of biological role, mediates the hydrolysis of agmatine into N-carbamoylputrescine in the arginine decarboxylase (ADC) pathway of putrescine biosynthesis, a basic polyamine. The polypeptide is Agmatine deiminase (Pseudomonas aeruginosa (strain LESB58)).